Here is a 185-residue protein sequence, read N- to C-terminus: Lipid A acyltransferase PagP (185 aa).

A signal peptide spans 1-24 (MKTHNDILAALAALPLFLTGAAFA). Residues histidine 57, aspartate 100, and serine 101 contribute to the active site.

Belongs to the lipid A palmitoyltransferase family. As to quaternary structure, homodimer.

It localises to the cell outer membrane. It carries out the reaction a lipid A + a 1,2-diacyl-sn-glycero-3-phosphocholine = a hepta-acyl lipid A + a 2-acyl-sn-glycero-3-phosphocholine. The catalysed reaction is a lipid IVA + a 1,2-diacyl-sn-glycero-3-phosphocholine = a lipid IVB + a 2-acyl-sn-glycero-3-phosphocholine. The enzyme catalyses a lipid IIA + a 1,2-diacyl-sn-glycero-3-phosphocholine = a lipid IIB + a 2-acyl-sn-glycero-3-phosphocholine. In terms of biological role, transfers a fatty acid residue from the sn-1 position of a phospholipid to the N-linked hydroxyfatty acid chain on the proximal unit of lipid A or its precursors. This is Lipid A acyltransferase PagP from Edwardsiella tarda (strain FL6-60).